The following is a 278-amino-acid chain: Probable ribosomal RNA small subunit methyltransferase A (278 aa).

S-adenosyl-L-methionine contacts are provided by H25, M27, G52, E73, D98, and N114.

The protein belongs to the class I-like SAM-binding methyltransferase superfamily. rRNA adenine N(6)-methyltransferase family. RsmA subfamily.

It is found in the cytoplasm. Functionally, specifically dimethylates two adjacent adenosines in the loop of a conserved hairpin near the 3'-end of 16S rRNA in the 30S particle. May play a critical role in biogenesis of 30S subunits. This Methanopyrus kandleri (strain AV19 / DSM 6324 / JCM 9639 / NBRC 100938) protein is Probable ribosomal RNA small subunit methyltransferase A.